We begin with the raw amino-acid sequence, 185 residues long: Ribosome-recycling factor (185 aa).

It belongs to the RRF family.

The protein localises to the cytoplasm. Functionally, responsible for the release of ribosomes from messenger RNA at the termination of protein biosynthesis. May increase the efficiency of translation by recycling ribosomes from one round of translation to another. This is Ribosome-recycling factor from Corynebacterium efficiens (strain DSM 44549 / YS-314 / AJ 12310 / JCM 11189 / NBRC 100395).